Reading from the N-terminus, the 201-residue chain is Large ribosomal subunit protein bL9 (201 aa).

Basic and acidic residues predominate over residues 150-165; the sequence is EAERQAAGEDLTQRRD. The tract at residues 150–201 is disordered; it reads EAERQAAGEDLTQRRDDEEEEAVEAAEFFESEELAPGDEEEEAAGEEEDAKE. Over residues 166-201 the composition is skewed to acidic residues; sequence DEEEEAVEAAEFFESEELAPGDEEEEAAGEEEDAKE.

Belongs to the bacterial ribosomal protein bL9 family.

Binds to the 23S rRNA. This chain is Large ribosomal subunit protein bL9, found in Parvibaculum lavamentivorans (strain DS-1 / DSM 13023 / NCIMB 13966).